The primary structure comprises 193 residues: dCTP deaminase (193 aa).

Residues 110–115 (RSSLAR), Asp128, 136–138 (VLE), Tyr171, Lys178, and Gln182 contribute to the dCTP site. Glu138 functions as the Proton donor/acceptor in the catalytic mechanism. Positions 169–193 (RPYNRREDAKYRNQQGAVASRIDKD) are disordered.

It belongs to the dCTP deaminase family. As to quaternary structure, homotrimer.

The catalysed reaction is dCTP + H2O + H(+) = dUTP + NH4(+). It functions in the pathway pyrimidine metabolism; dUMP biosynthesis; dUMP from dCTP (dUTP route): step 1/2. In terms of biological role, catalyzes the deamination of dCTP to dUTP. The sequence is that of dCTP deaminase from Escherichia coli O1:K1 / APEC.